We begin with the raw amino-acid sequence, 300 residues long: MDQNNSLPPYAQGLASPQSAMTPGIPIFSPMMPYGTGLTPQPAQSTNSLSILEEQQRQQQQAAAQQSTSQPTQAPSGQTPQLFHSQTLTTAPLPGTTPLYPSPMTPMTPITPATPASESSGIVPQLQNIVSTVNLGCKLDLKTIALRARNAEYNPKRFAAVIMRIREPRTTALIFSSGKMVCTGAKSEEQSRLAARKYARVVQKLGFPAKFLDFKIQNMVGSCDVKFPIRLEGLVLTHQQFSSYEPELFPGLIYRMIKPRIVLLIFVSGKVVLTGAKVRGEIYEAFENIYPILKGFRKTT.

Disordered regions lie at residues 1-22 (MDQN…SAMT) and 53-119 (EEQQ…ASES). 2 stretches are compositionally biased toward low complexity: residues 57 to 99 (RQQQ…TTPL) and 107 to 117 (MTPITPATPAS). 2 consecutive repeat copies span residues 126–202 (LQNI…ARVV) and 216–293 (IQNM…YPIL).

It belongs to the TBP family. In terms of assembly, belongs to the TFIID complex together with the TBP-associated factors (TAFs). Binds DNA as monomer.

The protein resides in the nucleus. In terms of biological role, general transcription factor that functions at the core of the DNA-binding multiprotein factor TFIID. Binding of TFIID to the TATA box is the initial transcriptional step of the pre-initiation complex (PIC), playing a role in the activation of eukaryotic genes transcribed by RNA polymerase II. This chain is TATA-box-binding protein (TBP), found in Protobothrops flavoviridis (Habu).